A 633-amino-acid polypeptide reads, in one-letter code: 1-deoxy-D-xylulose-5-phosphate synthase (633 aa).

Residues His72 and Gly113–Ser115 contribute to the thiamine diphosphate site. Asp144 serves as a coordination point for Mg(2+). Thiamine diphosphate contacts are provided by residues Gly145–Ala146, Asn173, Tyr284, and Glu367. Asn173 is a binding site for Mg(2+).

The protein belongs to the transketolase family. DXPS subfamily. Homodimer. Mg(2+) serves as cofactor. Requires thiamine diphosphate as cofactor.

It carries out the reaction D-glyceraldehyde 3-phosphate + pyruvate + H(+) = 1-deoxy-D-xylulose 5-phosphate + CO2. Its pathway is metabolic intermediate biosynthesis; 1-deoxy-D-xylulose 5-phosphate biosynthesis; 1-deoxy-D-xylulose 5-phosphate from D-glyceraldehyde 3-phosphate and pyruvate: step 1/1. Its function is as follows. Catalyzes the acyloin condensation reaction between C atoms 2 and 3 of pyruvate and glyceraldehyde 3-phosphate to yield 1-deoxy-D-xylulose-5-phosphate (DXP). This is 1-deoxy-D-xylulose-5-phosphate synthase from Bacillus licheniformis (strain ATCC 14580 / DSM 13 / JCM 2505 / CCUG 7422 / NBRC 12200 / NCIMB 9375 / NCTC 10341 / NRRL NRS-1264 / Gibson 46).